We begin with the raw amino-acid sequence, 250 residues long: 2,3-bisphosphoglycerate-dependent phosphoglycerate mutase (250 aa).

Substrate-binding positions include 10-17, 23-24, R62, 89-92, K100, 116-117, and 185-186; these read RHGESQWN, TG, ERHY, RR, and GN. The active-site Tele-phosphohistidine intermediate is H11. E89 acts as the Proton donor/acceptor in catalysis.

The protein belongs to the phosphoglycerate mutase family. BPG-dependent PGAM subfamily. In terms of assembly, homodimer.

The catalysed reaction is (2R)-2-phosphoglycerate = (2R)-3-phosphoglycerate. It functions in the pathway carbohydrate degradation; glycolysis; pyruvate from D-glyceraldehyde 3-phosphate: step 3/5. Catalyzes the interconversion of 2-phosphoglycerate and 3-phosphoglycerate. The sequence is that of 2,3-bisphosphoglycerate-dependent phosphoglycerate mutase from Pectobacterium carotovorum subsp. carotovorum (strain PC1).